We begin with the raw amino-acid sequence, 330 residues long: Type I restriction enzyme MpnII specificity subunit (330 aa).

This sequence belongs to the type-I restriction system S methylase family. In terms of assembly, the methyltransferase is composed of M and S polypeptides.

The specificity (S) subunit of a type I restriction enzyme; this subunit dictates DNA sequence specificity. The M and S subunits together form a methyltransferase (MTase) that probably methylates A-2 on the top strand and A-3 on the bottom strand of the sequence 5'-GAN(7)TAY-3'. As the bacterial DNA is methylated on this sequence and this is the only type I methylase in the genome, it is probably responsible for all of the methylation on this site in the genome. The R subunit has multiple frameshifts and is probably not expressed in this bacteria. The protein is Type I restriction enzyme MpnII specificity subunit of Mycoplasma pneumoniae (strain ATCC 29342 / M129 / Subtype 1) (Mycoplasmoides pneumoniae).